Reading from the N-terminus, the 344-residue chain is tRNA N6-adenosine threonylcarbamoyltransferase (344 aa).

Fe cation is bound by residues His-111 and His-115. Substrate-binding positions include 134–138, Asp-167, Gly-180, and Asn-277; that span reads LVSGG. Asp-305 provides a ligand contact to Fe cation.

Belongs to the KAE1 / TsaD family. The cofactor is Fe(2+).

It is found in the cytoplasm. It carries out the reaction L-threonylcarbamoyladenylate + adenosine(37) in tRNA = N(6)-L-threonylcarbamoyladenosine(37) in tRNA + AMP + H(+). Its function is as follows. Required for the formation of a threonylcarbamoyl group on adenosine at position 37 (t(6)A37) in tRNAs that read codons beginning with adenine. Is involved in the transfer of the threonylcarbamoyl moiety of threonylcarbamoyl-AMP (TC-AMP) to the N6 group of A37, together with TsaE and TsaB. TsaD likely plays a direct catalytic role in this reaction. The polypeptide is tRNA N6-adenosine threonylcarbamoyltransferase (Glaesserella parasuis serovar 5 (strain SH0165) (Haemophilus parasuis)).